The primary structure comprises 545 residues: CTP synthase (545 aa).

The segment at 1 to 266 is amidoligase domain; the sequence is MTTNYIFVTG…DDYICKRFSL (266 aa). Residue Ser14 participates in CTP binding. Position 14 (Ser14) interacts with UTP. ATP contacts are provided by residues 15-20 and Asp72; that span reads SLGKGI. Positions 72 and 140 each coordinate Mg(2+). Residues 147-149, 187-192, and Lys223 contribute to the CTP site; these read DIE and KTKPTQ. UTP contacts are provided by residues 187-192 and Lys223; that span reads KTKPTQ. 239-241 provides a ligand contact to ATP; that stretch reads KDV. Residues 291–542 enclose the Glutamine amidotransferase type-1 domain; sequence NIGMVGKYVE…VKAASEYQKR (252 aa). Gly352 is an L-glutamine binding site. Cys379 (nucleophile; for glutamine hydrolysis) is an active-site residue. L-glutamine contacts are provided by residues 380 to 383, Glu403, and Arg470; that span reads LGMQ. Active-site residues include His515 and Glu517.

The protein belongs to the CTP synthase family. Homotetramer.

The catalysed reaction is UTP + L-glutamine + ATP + H2O = CTP + L-glutamate + ADP + phosphate + 2 H(+). The enzyme catalyses L-glutamine + H2O = L-glutamate + NH4(+). It catalyses the reaction UTP + NH4(+) + ATP = CTP + ADP + phosphate + 2 H(+). Its pathway is pyrimidine metabolism; CTP biosynthesis via de novo pathway; CTP from UDP: step 2/2. Its activity is regulated as follows. Allosterically activated by GTP, when glutamine is the substrate; GTP has no effect on the reaction when ammonia is the substrate. The allosteric effector GTP functions by stabilizing the protein conformation that binds the tetrahedral intermediate(s) formed during glutamine hydrolysis. Inhibited by the product CTP, via allosteric rather than competitive inhibition. Catalyzes the ATP-dependent amination of UTP to CTP with either L-glutamine or ammonia as the source of nitrogen. Regulates intracellular CTP levels through interactions with the four ribonucleotide triphosphates. The sequence is that of CTP synthase from Erwinia tasmaniensis (strain DSM 17950 / CFBP 7177 / CIP 109463 / NCPPB 4357 / Et1/99).